The primary structure comprises 260 residues: 3'-5' ssDNA/RNA exonuclease TatD (260 aa).

A divalent metal cation is bound by residues E91, H127, and H152.

Belongs to the metallo-dependent hydrolases superfamily. TatD-type hydrolase family. TatD subfamily. Monomer. Mg(2+) is required as a cofactor.

It is found in the cytoplasm. Functionally, 3'-5' exonuclease that prefers single-stranded DNA and RNA. May play a role in the H(2)O(2)-induced DNA damage repair. The sequence is that of 3'-5' ssDNA/RNA exonuclease TatD from Enterobacter sp. (strain 638).